Consider the following 128-residue polypeptide: Small ribosomal subunit protein uS9 (128 aa).

Residues 106 to 128 (PRVVERKKPGRPKARKRFQFSKR) form a disordered region. Over residues 113–128 (KPGRPKARKRFQFSKR) the composition is skewed to basic residues.

The protein belongs to the universal ribosomal protein uS9 family.

The chain is Small ribosomal subunit protein uS9 from Porphyromonas gingivalis (strain ATCC 33277 / DSM 20709 / CIP 103683 / JCM 12257 / NCTC 11834 / 2561).